The following is a 527-amino-acid chain: Beta-glucosidase 19 (527 aa).

Positions 1 to 21 (MKIPLLGLLLLISLVGSPTRA) are cleaved as a signal peptide. 2 residues coordinate a beta-D-glucoside: Q52 and H155. N183 is a glycosylation site (N-linked (GlcNAc...) asparagine). 200–201 (NE) is an a beta-D-glucoside binding site. The active-site Proton donor is the E201. C220 and C231 are oxidised to a cystine. A beta-D-glucoside contacts are provided by Y345 and E418. E418 functions as the Nucleophile in the catalytic mechanism. N-linked (GlcNAc...) asparagine glycosylation is present at N462. Residues W469, 476–477 (EW), and F485 contribute to the a beta-D-glucoside site. N495 carries an N-linked (GlcNAc...) asparagine glycan. The Prevents secretion from ER signature appears at 524 to 527 (HEEL).

Belongs to the glycosyl hydrolase 1 family.

Its subcellular location is the endoplasmic reticulum lumen. It carries out the reaction Hydrolysis of terminal, non-reducing beta-D-glucosyl residues with release of beta-D-glucose.. The sequence is that of Beta-glucosidase 19 from Arabidopsis thaliana (Mouse-ear cress).